The chain runs to 77 residues: Delta-conotoxin GmVIA (77 aa).

A signal peptide spans M1–A22. The propeptide occupies D23–R48. 3 disulfide bridges follow: C52–C67, C59–C72, and C66–C76.

The protein belongs to the conotoxin O1 superfamily. In terms of tissue distribution, expressed by the venom duct.

The protein localises to the secreted. Functionally, delta-conotoxins bind to site 6 of voltage-gated sodium channels (Nav) and inhibit the inactivation process. This toxin shows weak activity on rNav1.2/SCN2A (EC(50)=2.5 uM) and rNav1.4/SCN4A (EC(50)=4.8 uM). In vivo, injection of this peptide in the head region of garden snail induces retraction of the head and body into shell. This is followed by secretion of viscous green slime and a convulsive undulation into and out of the shell. No apparent biological activity was observed when a much greater dose of peptide was injected intraperitoneally into mice. The protein is Delta-conotoxin GmVIA of Conus gloriamaris (Glory-of-the-Sea cone).